Consider the following 109-residue polypeptide: Parvalbumin beta (109 aa).

Residue Ala-2 is modified to N-acetylalanine. EF-hand domains are found at residues 39 to 74 (KSAD…FKAG) and 78 to 109 (LSDA…MIKG). Asp-52, Asp-54, Ser-56, Tyr-58, Glu-60, Glu-63, Asp-91, Asp-93, Asp-95, Lys-97, and Glu-102 together coordinate Ca(2+).

It belongs to the parvalbumin family. The N-terminus is blocked.

Functionally, in muscle, parvalbumin is thought to be involved in relaxation after contraction. It binds two calcium ions. The sequence is that of Parvalbumin beta from Scomber scombrus (Atlantic mackerel).